The following is a 385-amino-acid chain: Flavin-dependent monooxygenase (385 aa).

FAD is bound by residues 12–15, 34–36, 44–47, arginine 105, tyrosine 267, aspartate 289, and 296–302; these read ASIA, EKN, YAID, and PLSGQGT.

This sequence belongs to the aromatic-ring hydroxylase family. It depends on FAD as a cofactor.

It carries out the reaction 7-chlorotetracycline + NADPH + O2 + H(+) = (1S,10S,10aS)-3-(CONH2)-9-Cl-1-(Me2N)-3,3a,4,10-(HO)4-10-Me-2,5-dioxo-1H,10aH,11H,11aH-cyclopenta[b]anthracen-6-olate + CO + NADP(+) + H2O. The enzyme catalyses a tetracycline + NADPH + O2 + H(+) = a (1S,10aS)-3-(CONH2)-1-(Me2N)-3,3a,4,6-(HO)4-2,5-dioxo-1H,10aH,11H,11aH-cyclopenta[b]anthracene + CO + NADP(+) + H2O. Inhibited by anhydrotetracycline. In terms of biological role, an FAD-requiring monooxygenase active on tetracycline antibiotic and some of its derivatives, which leads to their inactivation. Expression in E.coli confers high resistance to oxytetracycline, slightly less resistance to tetracycline, moderate resistance to minocycline but no resistance to tigecycline. Degrades tetracycline and oxytetracycline; the reaction requires NADPH. Degrades and confers resistance to chlortetracycline. This is Flavin-dependent monooxygenase from Unknown prokaryotic organism.